The following is a 216-amino-acid chain: Uracil phosphoribosyltransferase (216 aa).

Residues R85, R110, and 136-144 (DPMLATGNS) contribute to the 5-phospho-alpha-D-ribose 1-diphosphate site. Residues I201 and 206 to 208 (GDA) contribute to the uracil site. Position 207 (D207) interacts with 5-phospho-alpha-D-ribose 1-diphosphate.

Belongs to the UPRTase family. It depends on Mg(2+) as a cofactor.

The enzyme catalyses UMP + diphosphate = 5-phospho-alpha-D-ribose 1-diphosphate + uracil. It participates in pyrimidine metabolism; UMP biosynthesis via salvage pathway; UMP from uracil: step 1/1. With respect to regulation, allosterically activated by GTP. Catalyzes the conversion of uracil and 5-phospho-alpha-D-ribose 1-diphosphate (PRPP) to UMP and diphosphate. This is Uracil phosphoribosyltransferase from Rhodospirillum centenum (strain ATCC 51521 / SW).